A 215-amino-acid polypeptide reads, in one-letter code: 3-isopropylmalate dehydratase small subunit (215 aa).

The protein belongs to the LeuD family. LeuD type 1 subfamily. In terms of assembly, heterodimer of LeuC and LeuD.

The enzyme catalyses (2R,3S)-3-isopropylmalate = (2S)-2-isopropylmalate. It functions in the pathway amino-acid biosynthesis; L-leucine biosynthesis; L-leucine from 3-methyl-2-oxobutanoate: step 2/4. Functionally, catalyzes the isomerization between 2-isopropylmalate and 3-isopropylmalate, via the formation of 2-isopropylmaleate. In Stutzerimonas stutzeri (strain A1501) (Pseudomonas stutzeri), this protein is 3-isopropylmalate dehydratase small subunit.